Reading from the N-terminus, the 565-residue chain is MLVLTETSVGFVVFKLSSDAKIDNKDLWKEFETPEGANKALKVQAIQRFTSTASAVEDLTAVQDGRLTDSLSRFLLDTVGGADDGEKKKKKKKIEEMLVVSDPKLAGTINKALSIPVLSDSSTQDLYRGIRQQLASLLGGVDQKDLNTMSLGLGHSLSRFKLKFSTDKVDTMVIQAIALLDDLDKEINIYAMRVKEWYGWHFPEMAKIIVDNIAFARVVKAMGFRTNAVTTDFSLLLPEDLEATLKSAAELSMGTEISDSDMTHIHSLCDQVISISEYRTQLSEYLRNRMQAIAPNLTALVGELVGARLISHAGSLMNLAKHPASTVQILGAEKALFRALKTKHDTPKYGLIYHASLIGQAPQKLKGKMARMVATKAALSIRVDALSDADSRSDVSAAEVGISNRVKLESRLRALEHQAGIQSVRKVVSANGQQGRQQPRFEMSGVTGSYNAATDNVPLNGDLLPTQPATEEVKEEKDEKKDKKKKRKSEVAEAGDVTMDGDADLSMVAGETKEERRARKEAKKAAKAAKKAAEESGDGDKKSKKRRADEDEDSEKKKKKKKKDE.

A Nop domain is found at 293–417; it reads IAPNLTALVG…LESRLRALEH (125 aa). The segment at 430–565 is disordered; that stretch reads ANGQQGRQQP…KKKKKKKKDE (136 aa). Over residues 471-481 the composition is skewed to basic and acidic residues; it reads EEVKEEKDEKK. Residues 519-530 show a composition bias toward basic residues; sequence RKEAKKAAKAAK. Over residues 531 to 541 the composition is skewed to basic and acidic residues; the sequence is KAAEESGDGDK.

This sequence belongs to the NOP5/NOP56 family.

It is found in the nucleus. The protein localises to the nucleolus. Required for pre-18S rRNA processing. May bind microtubules. This Cryptococcus neoformans var. neoformans serotype D (strain B-3501A) (Filobasidiella neoformans) protein is Nucleolar protein 58 (NOP58).